We begin with the raw amino-acid sequence, 409 residues long: Microfibrillar-associated protein 3-like (409 aa).

The first 28 residues, 1 to 28 (MDRLKSHLTVCFLPSVPFLILVSTLATA), serve as a signal peptide directing secretion. The Extracellular portion of the chain corresponds to 29 to 149 (KSVTNSTLNG…LRVIFTSGDM (121 aa)). N33, N37, N67, N111, and N135 each carry an N-linked (GlcNAc...) asparagine glycan. An Ig-like C2-type domain is found at 47–141 (PVIIARTDHI…GTVNNTVTLR (95 aa)). C68 and C125 are oxidised to a cystine. A helical transmembrane segment spans residues 150-172 (GVYYMVVCLVAFTIVMVLNITRL). At 173–409 (CMMSSHLKKT…NTCIIYESHV (237 aa)) the chain is on the cytoplasmic side. Phosphotyrosine; by EGFR is present on Y287. Disordered regions lie at residues 292–311 (SLKRSDSPAADSDASSLHEQ) and 320–385 (SVHP…VLPP). Phosphoserine is present on residues S298, S303, S306, and S307. Residues 339 to 355 (EVKDVEETELSAEHSPE) are compositionally biased toward basic and acidic residues. Residues 363 to 377 (VTSTELTSEEPTPVE) show a composition bias toward low complexity.

In terms of tissue distribution, highly expressed in testis.

The protein resides in the cell membrane. It is found in the nucleus. Its subcellular location is the cytoplasm. Its function is as follows. May participate in the nuclear signaling of EGFR and MAPK1/ERK2. May a have a role in metastasis. The polypeptide is Microfibrillar-associated protein 3-like (MFAP3L) (Homo sapiens (Human)).